The chain runs to 148 residues: TEFSADQIEDFKEAFGLFDRIGDSQVAFNQVADIMRALGQNPTNKDVTKILGNPSADDMANKRLNFDAFLPMLKEVDALPKGTYDDYVEGLRVFDKEGNGTVMGAELRIVLSTLGEKMTEPEIDALMAGQEDEGSVHYEAFVKHIMSV.

Position 1 is an N-acetylthreonine (T1). EF-hand domains are found at residues 6 to 41 (DQIE…LGQN) and 82 to 117 (GTYD…LGEK).

Myosin is a hexamer of 2 heavy chains and 4 light chains.

This is Myosin light chain 3, skeletal muscle isoform from Chelon ramada (Thin-lipped grey mullet).